Consider the following 212-residue polypeptide: Protein-L-isoaspartate O-methyltransferase (212 aa).

Residue Ser60 is part of the active site.

This sequence belongs to the methyltransferase superfamily. L-isoaspartyl/D-aspartyl protein methyltransferase family.

The protein resides in the cytoplasm. It carries out the reaction [protein]-L-isoaspartate + S-adenosyl-L-methionine = [protein]-L-isoaspartate alpha-methyl ester + S-adenosyl-L-homocysteine. In terms of biological role, catalyzes the methyl esterification of L-isoaspartyl residues in peptides and proteins that result from spontaneous decomposition of normal L-aspartyl and L-asparaginyl residues. It plays a role in the repair and/or degradation of damaged proteins. The chain is Protein-L-isoaspartate O-methyltransferase from Methanococcus maripaludis (strain C7 / ATCC BAA-1331).